Reading from the N-terminus, the 94-residue chain is Small ribosomal subunit protein bS6 (94 aa).

Belongs to the bacterial ribosomal protein bS6 family.

Binds together with bS18 to 16S ribosomal RNA. This is Small ribosomal subunit protein bS6 from Alkaliphilus oremlandii (strain OhILAs) (Clostridium oremlandii (strain OhILAs)).